We begin with the raw amino-acid sequence, 678 residues long: MTEARKILVTSALPYANGSIHLGHMLEYVQTDMWVRYQKLRGNQAIYVCADDAHGSAIMLRAEKEGITPEQLIDGVRAEHMADFADFGVDFDNYHSTHSQENRELSASIYLALRDKGHIATRAVTQYFDPEKGMFLADRFIKGSCPKCGAEDQYGDNCEKCGATYTPTELKNPRSAISGAVPVLKESQHFFFKLPDFEAMLKQWTRSGALQEAVANKIAEWLDGGLQEWDISRDAPYFGFEIPGEPGKYFYVWLDAPIGYMASFKNLCSKRPELDFDAFWGKDSTAELYHFIGKDIVNFHALFWPAMLEGAGYRKPTAVNVHGYLTVNGQKMSKSRGTFIKARTYLDHLNPEYLRYYYASKLGRGVDDLDLNLEDFVQKVNSDLVGKVVNIASRCAGFIHKGNDGLLVAANPEPELWDAFQAAAPSIAEAYEARDFSRAMREIMALADRANAWIADKAPWALNKVEGKQAEVQEICALGINLFRQLVIMLKPVLPKLAADAEAFLNVKPQTWADLSLPLANHQLNPFNPLLTRIEPAKIEAMVEASKEDLAAEASKPQGNGELAKDPLAAEINFDAFAAVDLRIALIEKCEFVEGADKLLRLSLDIGDEKRNVFSGIKSAYPDPSKLEGRLTLYVANLAPRKMKFGISEGMVLAAGPGGEEIYLLSPDSGAKPGQRVK.

The short motif at 14 to 24 is the 'HIGH' region element; it reads PYANGSIHLGH. 4 residues coordinate Zn(2+): Cys-145, Cys-148, Cys-158, and Cys-161. The 'KMSKS' region motif lies at 331–335; it reads KMSKS. Lys-334 is an ATP binding site. Residues 576–678 enclose the tRNA-binding domain; it reads AFAAVDLRIA…SGAKPGQRVK (103 aa).

The protein belongs to the class-I aminoacyl-tRNA synthetase family. MetG type 1 subfamily. In terms of assembly, homodimer. Requires Zn(2+) as cofactor.

The protein localises to the cytoplasm. It catalyses the reaction tRNA(Met) + L-methionine + ATP = L-methionyl-tRNA(Met) + AMP + diphosphate. Is required not only for elongation of protein synthesis but also for the initiation of all mRNA translation through initiator tRNA(fMet) aminoacylation. In Ectopseudomonas mendocina (strain ymp) (Pseudomonas mendocina), this protein is Methionine--tRNA ligase.